The following is a 719-amino-acid chain: Phosphoribosylformylglycinamidine synthase subunit PurL (719 aa).

Residue His-45 is part of the active site. Positions 48 and 87 each coordinate ATP. Position 89 (Glu-89) interacts with Mg(2+). Residues 90-93 (SHNH) and Arg-112 each bind substrate. Residue His-91 is the Proton acceptor of the active site. Asp-113 contacts Mg(2+). A substrate-binding site is contributed by Gln-236. Mg(2+) is bound at residue Asp-264. 308–310 (ESQ) lines the substrate pocket. ATP-binding residues include Asn-493 and Gly-530. Asn-531 lines the Mg(2+) pocket. Ser-533 serves as a coordination point for substrate.

The protein belongs to the FGAMS family. Monomer. Part of the FGAM synthase complex composed of 1 PurL, 1 PurQ and 2 PurS subunits.

It localises to the cytoplasm. The enzyme catalyses N(2)-formyl-N(1)-(5-phospho-beta-D-ribosyl)glycinamide + L-glutamine + ATP + H2O = 2-formamido-N(1)-(5-O-phospho-beta-D-ribosyl)acetamidine + L-glutamate + ADP + phosphate + H(+). It participates in purine metabolism; IMP biosynthesis via de novo pathway; 5-amino-1-(5-phospho-D-ribosyl)imidazole from N(2)-formyl-N(1)-(5-phospho-D-ribosyl)glycinamide: step 1/2. Part of the phosphoribosylformylglycinamidine synthase complex involved in the purines biosynthetic pathway. Catalyzes the ATP-dependent conversion of formylglycinamide ribonucleotide (FGAR) and glutamine to yield formylglycinamidine ribonucleotide (FGAM) and glutamate. The FGAM synthase complex is composed of three subunits. PurQ produces an ammonia molecule by converting glutamine to glutamate. PurL transfers the ammonia molecule to FGAR to form FGAM in an ATP-dependent manner. PurS interacts with PurQ and PurL and is thought to assist in the transfer of the ammonia molecule from PurQ to PurL. The sequence is that of Phosphoribosylformylglycinamidine synthase subunit PurL from Novosphingobium aromaticivorans (strain ATCC 700278 / DSM 12444 / CCUG 56034 / CIP 105152 / NBRC 16084 / F199).